Reading from the N-terminus, the 427-residue chain is MTEAMKITLSTQPADARWGEKATYSINNDGITLHLNGADDLGLIQRAARKIDGLGIKHVQLSGEGWDADRCWAFWQGYKGPKGTRKVEWPDLDDAQRQELDNRLMIIDWVRDTINAPAEELGPSQLAQRAVDLISNVAGDRVTYRITKGEDLREQGYMGLHTVGRGSERSPVLLALDYNPTGDKEAPVYACLVGKGITFDSGGYSIKQTAFMDSMKSDMGGAATVTGALAFAIMRGLNKRVKLFLCCADNLISGNAFKLGDIITYRNGKKVEVMNTDAEGRLVLADGLIDASAQKPEMIIDAATLTGAAKTALGNDYHALFSFDDALAGRLLASASQENEPFWRLPLAEFHRSQLPSNFAELNNTGSAAYPAGASTAAGFLSHFVENYQQGWLHIDCSATYRKAPVEQWSAGATGLGVRTIANLLTA.

2 residues coordinate Mn(2+): Lys195 and Asp200. Lys207 is a catalytic residue. Positions 218, 277, and 279 each coordinate Mn(2+). Arg281 is a catalytic residue.

The protein belongs to the peptidase M17 family. In terms of assembly, homohexamer. Mn(2+) serves as cofactor.

Its subcellular location is the cytoplasm. It carries out the reaction Release of an N-terminal amino acid, Xaa, from a peptide or arylamide. Xaa is preferably Glu or Asp but may be other amino acids, including Leu, Met, His, Cys and Gln.. In terms of biological role, probably plays an important role in intracellular peptide degradation. The protein is Peptidase B of Shigella flexneri.